The chain runs to 323 residues: o-succinylbenzoate synthase (323 aa).

The active-site Proton donor is the Lys134. Mg(2+)-binding residues include Asp162, Glu191, and Asp214. Catalysis depends on Lys236, which acts as the Proton acceptor.

Belongs to the mandelate racemase/muconate lactonizing enzyme family. MenC type 1 subfamily. A divalent metal cation serves as cofactor.

The catalysed reaction is (1R,6R)-6-hydroxy-2-succinyl-cyclohexa-2,4-diene-1-carboxylate = 2-succinylbenzoate + H2O. Its pathway is quinol/quinone metabolism; 1,4-dihydroxy-2-naphthoate biosynthesis; 1,4-dihydroxy-2-naphthoate from chorismate: step 4/7. The protein operates within quinol/quinone metabolism; menaquinone biosynthesis. Converts 2-succinyl-6-hydroxy-2,4-cyclohexadiene-1-carboxylate (SHCHC) to 2-succinylbenzoate (OSB). In Yersinia pestis bv. Antiqua (strain Antiqua), this protein is o-succinylbenzoate synthase.